Consider the following 320-residue polypeptide: N-acetylneuraminate lyase (320 aa).

Thr-51 and Thr-52 together coordinate aceneuramate. Tyr-143 (proton donor) is an active-site residue. Catalysis depends on Lys-173, which acts as the Schiff-base intermediate with substrate. Residues Ser-175, Gly-199, Asp-201, Glu-202, and Ser-218 each contribute to the aceneuramate site.

This sequence belongs to the DapA family. NanA subfamily. Homotetramer. In terms of tissue distribution, isoform 2 is expressed in placenta, liver, kidney, pancreas, spleen, thymus, ovary, small intestine and peripheral blood leukocyte.

Its subcellular location is the cytoplasm. It catalyses the reaction aceneuramate = aldehydo-N-acetyl-D-mannosamine + pyruvate. The protein operates within amino-sugar metabolism; N-acetylneuraminate degradation. Its function is as follows. Catalyzes the cleavage of N-acetylneuraminic acid (sialic acid) to form pyruvate and N-acetylmannosamine via a Schiff base intermediate. It prevents sialic acids from being recycled and returning to the cell surface. Involved in the N-glycolylneuraminic acid (Neu5Gc) degradation pathway. Although human is not able to catalyze formation of Neu5Gc due to the inactive CMAHP enzyme, Neu5Gc is present in food and must be degraded. In Homo sapiens (Human), this protein is N-acetylneuraminate lyase.